Reading from the N-terminus, the 550-residue chain is Aldehyde dehydrogenase family 3 member I1, chloroplastic (550 aa).

A chloroplast-targeting transit peptide spans 1–59 (MTKLLEINHIQTLCFAKGFSPARLNVATSPFRISRRGGGGYCSNACIPYRLKFTCYATL). 259-264 (GGARVA) serves as a coordination point for NAD(+). Glutamate 281 (proton acceptor) is an active-site residue. Catalysis depends on cysteine 316, which acts as the Nucleophile.

The protein belongs to the aldehyde dehydrogenase family. As to quaternary structure, homodimer and homomultimer.

Its subcellular location is the plastid. The protein localises to the chloroplast. It carries out the reaction an aldehyde + NAD(+) + H2O = a carboxylate + NADH + 2 H(+). Thiol-based regulation. Inactivation after dimerization under oxidizing conditions. Functionally, involved in oxidative stress tolerance by detoxifying reactive aldehydes derived from lipid peroxidation. Medium- to long-chain saturated aldehydes are preferred substrates, while the short-chain aldehyde propanal is a weak substrate. Can use both NAD(+) and NADP(+), but the coenzyme preference is substrate dependent. In Arabidopsis thaliana (Mouse-ear cress), this protein is Aldehyde dehydrogenase family 3 member I1, chloroplastic (ALDH3I1).